The primary structure comprises 831 residues: Cysteine--tRNA ligase, cytoplasmic (831 aa).

At Ala2 the chain carries N-acetylalanine. Ser102 bears the Phosphoserine mark. Cys138 is a binding site for Zn(2+). Residue Gly139 coordinates L-cysteine. Positions 140-150 (PTVYDASHMGH) match the 'HIGH' region motif. Thr179 serves as a coordination point for L-cysteine. The 'KIIK' region signature appears at 184–187 (KIIR). Ser388 and Ser390 each carry phosphoserine. Zn(2+) contacts are provided by Cys431, His456, and Glu460. His456 is an L-cysteine binding site. Residues 489–493 (KMSKS) carry the 'KMSKS' region motif. Lys492 lines the ATP pocket. Positions 736-762 (GKKRAEEEKRRKKEEAARKKQEQEAAK) are enriched in basic and acidic residues. The segment at 736–766 (GKKRAEEEKRRKKEEAARKKQEQEAAKLAKM) is disordered. Ser829 carries the phosphoserine modification.

The protein belongs to the class-I aminoacyl-tRNA synthetase family. Homodimer. The cofactor is Zn(2+).

It is found in the cytoplasm. The enzyme catalyses tRNA(Cys) + L-cysteine + ATP = L-cysteinyl-tRNA(Cys) + AMP + diphosphate. Catalyzes the ATP-dependent ligation of cysteine to tRNA(Cys). This Mus musculus (Mouse) protein is Cysteine--tRNA ligase, cytoplasmic (Cars1).